We begin with the raw amino-acid sequence, 208 residues long: Small ribosomal subunit protein uS4 (208 aa).

Residues 98–164 (SRLDNVVYRM…DRIKFALELA (67 aa)) enclose the S4 RNA-binding domain.

The protein belongs to the universal ribosomal protein uS4 family. As to quaternary structure, part of the 30S ribosomal subunit. Contacts protein S5. The interaction surface between S4 and S5 is involved in control of translational fidelity.

One of the primary rRNA binding proteins, it binds directly to 16S rRNA where it nucleates assembly of the body of the 30S subunit. In terms of biological role, with S5 and S12 plays an important role in translational accuracy. This chain is Small ribosomal subunit protein uS4, found in Nitrosococcus oceani (strain ATCC 19707 / BCRC 17464 / JCM 30415 / NCIMB 11848 / C-107).